Reading from the N-terminus, the 34-residue chain is Photosystem II reaction center protein M (34 aa).

A helical transmembrane segment spans residues L6 to Y26.

Belongs to the PsbM family. As to quaternary structure, PSII is composed of 1 copy each of membrane proteins PsbA, PsbB, PsbC, PsbD, PsbE, PsbF, PsbH, PsbI, PsbJ, PsbK, PsbL, PsbM, PsbT, PsbX, PsbY, PsbZ, Psb30/Ycf12, peripheral proteins PsbO, CyanoQ (PsbQ), PsbU, PsbV and a large number of cofactors. It forms dimeric complexes.

It localises to the cellular thylakoid membrane. Its function is as follows. One of the components of the core complex of photosystem II (PSII). PSII is a light-driven water:plastoquinone oxidoreductase that uses light energy to abstract electrons from H(2)O, generating O(2) and a proton gradient subsequently used for ATP formation. It consists of a core antenna complex that captures photons, and an electron transfer chain that converts photonic excitation into a charge separation. This subunit is found at the monomer-monomer interface. The chain is Photosystem II reaction center protein M from Acaryochloris marina (strain MBIC 11017).